A 348-amino-acid polypeptide reads, in one-letter code: Erlin-1 (348 aa).

Residues 1-7 are Cytoplasmic-facing; that stretch reads MNMTQAR. The helical transmembrane segment at 8–28 threads the bilayer; sequence LLVAAVVGLVAILLYASIHKI. Topologically, residues 29 to 348 are lumenal; that stretch reads EEGHLAVYYR…SPIQNKENAG (320 aa). N-linked (GlcNAc...) asparagine glycosylation occurs at Asn108. Lys269 carries the N6-acetyllysine modification. The span at 318 to 336 shows a compositional bias: basic and acidic residues; it reads DGRTGREDSLPPEEAREPS. The interval 318–348 is disordered; it reads DGRTGREDSLPPEEAREPSGESPIQNKENAG. Polar residues predominate over residues 339–348; it reads SPIQNKENAG.

Belongs to the band 7/mec-2 family. As to quaternary structure, forms a heteromeric complex with ERLIN2. In complex with ERLIN2, interacts with RNF170. Interacts with AMFR and SYVN1. Deubiquitinated by USP25; leading to stabilization.

The protein resides in the endoplasmic reticulum membrane. Its function is as follows. Component of the ERLIN1/ERLIN2 complex which mediates the endoplasmic reticulum-associated degradation (ERAD) of inositol 1,4,5-trisphosphate receptors (IP3Rs). Involved in regulation of cellular cholesterol homeostasis by regulation the SREBP signaling pathway. Binds cholesterol and may promote ER retention of the SCAP-SREBF complex. The sequence is that of Erlin-1 from Mus musculus (Mouse).